Consider the following 515-residue polypeptide: DNA-directed RNA polymerase subunit Rpo2N (515 aa).

It belongs to the RNA polymerase beta chain family. As to quaternary structure, part of the RNA polymerase complex.

The protein resides in the cytoplasm. The enzyme catalyses RNA(n) + a ribonucleoside 5'-triphosphate = RNA(n+1) + diphosphate. Its function is as follows. DNA-dependent RNA polymerase (RNAP) catalyzes the transcription of DNA into RNA using the four ribonucleoside triphosphates as substrates. The Rpo2 subunit (Rpo2N and Rpo2C in this organism) is implicated in DNA promoter recognition and in nucleotide binding. This is DNA-directed RNA polymerase subunit Rpo2N from Methanothermobacter thermautotrophicus (strain Winter) (Methanobacterium thermoautotrophicum).